We begin with the raw amino-acid sequence, 544 residues long: WD repeat-containing protein 25 (544 aa).

Disordered stretches follow at residues 17-74 (DSDS…EDPG) and 183-208 (QRQALSTETGKGKDVEPQGPPAGRAP). Positions 30-39 (FNATGQQKDT) are enriched in polar residues. 7 WD repeats span residues 244-286 (GHRG…HCLQ), 290-329 (LHTEAVRAARWAPCGRRILSGGFDFALHLTDLETGTQLFS), 330-373 (GRSD…RSYK), 375-420 (TIQQ…KISN), 424-463 (HERFTCPSLALHPREPVFLAQTNGNYLALFSTVWPYRMSR), 469-510 (GHKV…RACT), and 513-544 (GHTQACVGTTYHPVLPSVLATCSWGGDMKIWH).

In terms of tissue distribution, expressed in heart, muscle, testis, ovary, uterus and prostate.

This Homo sapiens (Human) protein is WD repeat-containing protein 25.